The primary structure comprises 691 residues: Putative calcium up-regulated protein I (691 aa).

In terms of domain architecture, Ricin B-type lectin spans 47-174 (SNCYLKEKPQ…NYTSQIWTYN (128 aa)).

This sequence belongs to the cup family.

In Dictyostelium discoideum (Social amoeba), this protein is Putative calcium up-regulated protein I (cupI).